The following is a 687-amino-acid chain: UvrABC system protein C (687 aa).

The GIY-YIG domain maps to 16–95 (TEPGVYKFRD…IKKFDPHFNV (80 aa)). The 36-residue stretch at 208–243 (DSVVRRLTNEMISASEALDFEKAARKRDDLNAVRKI) folds into the UVR domain.

This sequence belongs to the UvrC family. In terms of assembly, interacts with UvrB in an incision complex.

Its subcellular location is the cytoplasm. The UvrABC repair system catalyzes the recognition and processing of DNA lesions. UvrC both incises the 5' and 3' sides of the lesion. The N-terminal half is responsible for the 3' incision and the C-terminal half is responsible for the 5' incision. The chain is UvrABC system protein C from Corynebacterium diphtheriae (strain ATCC 700971 / NCTC 13129 / Biotype gravis).